Here is a 640-residue protein sequence, read N- to C-terminus: Zinc finger protein 549 (640 aa).

The region spanning 27 to 140 is the KRAB domain; sequence VTFEDIAVYF…PYTSVASGKW (114 aa). The C2H2-type 1; degenerate zinc-finger motif lies at 217 to 241; it reads FQQRRYKCEQVFNEKVHVTEHQRVH. Lys-223 participates in a covalent cross-link: Glycyl lysine isopeptide (Lys-Gly) (interchain with G-Cter in SUMO2). The segment at 247–269 adopts a C2H2-type 2; degenerate zinc-finger fold; sequence YKRREYGKSLNSKYLFVEHQRTH. C2H2-type zinc fingers lie at residues 275 to 298, 304 to 326, 332 to 355, 361 to 383, 389 to 411, 417 to 439, 445 to 467, 473 to 495, 501 to 523, 529 to 551, 557 to 579, 585 to 607, and 613 to 635; these read YVCNICGKSFLHKQTLVGHQQRIH, YVCIECGKSLSSKYSLVEHQRTH, YVCNVCGKSFRHKQTFVGHQQRIH, YVCMECGKSFIHSYDRIRHQRVH, YQCSECGKSFIYKQSLLDHHRIH, YECKECGKAFIHKKRLLEHQRIH, YVCIICGKSFIRSSDYMRHQRIH, YECSDCGKAFISKQTLLKHHKIH, YECSECGKGFYLEVKLLQHQRIH, CECNECGKVFSHQKRLLEHQKVH, CECSECGKCFRHRTSLIQHQKVH, YNCTACEKAFIYKNKLVEHQRIH, and YECGKCGKAFNKRYSLVRHQKVH.

This sequence belongs to the krueppel C2H2-type zinc-finger protein family.

The protein localises to the nucleus. In terms of biological role, may be involved in transcriptional regulation. The chain is Zinc finger protein 549 (ZNF549) from Homo sapiens (Human).